The primary structure comprises 430 residues: Glutamate-1-semialdehyde 2,1-aminomutase (430 aa).

Position 268 is an N6-(pyridoxal phosphate)lysine (lysine 268).

It belongs to the class-III pyridoxal-phosphate-dependent aminotransferase family. HemL subfamily. In terms of assembly, homodimer. It depends on pyridoxal 5'-phosphate as a cofactor.

The protein resides in the cytoplasm. The catalysed reaction is (S)-4-amino-5-oxopentanoate = 5-aminolevulinate. Its pathway is porphyrin-containing compound metabolism; protoporphyrin-IX biosynthesis; 5-aminolevulinate from L-glutamyl-tRNA(Glu): step 2/2. The protein is Glutamate-1-semialdehyde 2,1-aminomutase (hemL) of Bacillus subtilis (strain 168).